The primary structure comprises 347 residues: NADH-ubiquinone oxidoreductase chain 2 (347 aa).

A run of 11 helical transmembrane segments spans residues 3 to 23 (PPIL…VMLS), 25 to 45 (HWLL…PVLM), 66 to 86 (ASML…QWVV), 96 to 116 (IMMT…FWVP), 122 to 142 (ITLT…MSVL), 149 to 169 (INTN…GWGG), 178 to 198 (IMAY…IYNP), 201 to 221 (MILN…LFML), 237 to 257 (FPLI…LPPL), 274 to 294 (NMII…YFYL), and 323 to 343 (TILL…TPML).

It belongs to the complex I subunit 2 family. As to quaternary structure, core subunit of respiratory chain NADH dehydrogenase (Complex I) which is composed of 45 different subunits. Interacts with TMEM242.

The protein localises to the mitochondrion inner membrane. It carries out the reaction a ubiquinone + NADH + 5 H(+)(in) = a ubiquinol + NAD(+) + 4 H(+)(out). Its function is as follows. Core subunit of the mitochondrial membrane respiratory chain NADH dehydrogenase (Complex I) which catalyzes electron transfer from NADH through the respiratory chain, using ubiquinone as an electron acceptor. Essential for the catalytic activity and assembly of complex I. The protein is NADH-ubiquinone oxidoreductase chain 2 of Canis rufus (Red wolf).